Here is a 268-residue protein sequence, read N- to C-terminus: Putative hydro-lyase ABAYE2440 (268 aa).

The protein belongs to the D-glutamate cyclase family.

The protein is Putative hydro-lyase ABAYE2440 of Acinetobacter baumannii (strain AYE).